An 821-amino-acid chain; its full sequence is V-type proton ATPase subunit a3 (821 aa).

At alanine 2 the chain carries N-acetylalanine. Topologically, residues 2–421 are cytoplasmic; it reads AESGGGGGCC…ANPGVFTIVT (420 aa). The stretch at 97-144 forms a coiled coil; sequence KENDIDLDDVEVKLGELEAELVEINANNDKLQRSYNELMEYKLVLQKA. Serine 174 carries the post-translational modification Phosphoserine. A helical transmembrane segment spans residues 422-442; that stretch reads FPFLFAVMFGDWGHGICILLA. Residues 443–469 lie on the Vacuolar side of the membrane; that stretch reads TMYLILKEKKLASQKLGDIMEMAFGGR. Residues 470-490 form a helical membrane-spanning segment; it reads YVILMMSLFSIYTGLIYNEFF. At 491–548 the chain is on the cytoplasmic side; sequence SIPFPLFAPSAYDCRDVSCSEATTIGLIKVRDTYPFGLDPVWHGSRSELPFLNSLKMK. A helical transmembrane segment spans residues 549 to 569; that stretch reads MSILLGVSQMNLGIIMSYFNA. Over 570–581 the chain is Vacuolar; it reads RFFKSSVNIWFQ. The helical transmembrane segment at 582–602 threads the bilayer; that stretch reads FIPQMIFLNSLFGYLSVLIII. The Cytoplasmic portion of the chain corresponds to 603–640; that stretch reads KWCTGSQADLYHVMIYMFLSPMDELGENQLFPHQKTLQ. A helical transmembrane segment spans residues 641-661; that stretch reads LVLLFLALVSVPCMLLPKPFI. Topologically, residues 662-758 are vacuolar; it reads LKKQHEARHQ…LLLAWGYNNP (97 aa). The chain crosses the membrane as a helical span at residues 759–779; the sequence is LILIVGVLVFIFATVGVLLVM. Residues 780–821 are Cytoplasmic-facing; it reads ETLSAFLHALRLHWVEFQNKFYEGDGYKFAPFTFIFTANEDE.

This sequence belongs to the V-ATPase 116 kDa subunit family. In terms of assembly, V-ATPase is a heteromultimeric enzyme composed of a peripheral catalytic V1 complex (components A to H) attached to an integral membrane V0 proton pore complex (components: a, c, c'', d and e). In terms of tissue distribution, expressed in etiolated seedlings hypocotyls.

It localises to the vacuole membrane. Functionally, essential component of the vacuolar proton pump (V-ATPase), a multimeric enzyme that catalyzes the translocation of protons across the membranes. Required for assembly and activity of the V-ATPase. Involved in vacuolar nutrient storage (e.g. accumulation and storage of nitrate) and in tolerance to some toxic ions (e.g. zinc ions sequestration in vacuoles). In Arabidopsis thaliana (Mouse-ear cress), this protein is V-type proton ATPase subunit a3 (VHA-a3).